Reading from the N-terminus, the 465-residue chain is UDP-N-acetylmuramate--L-alanine ligase (465 aa).

112 to 118 contacts ATP; sequence GTHGKTT.

Belongs to the MurCDEF family.

The protein resides in the cytoplasm. The catalysed reaction is UDP-N-acetyl-alpha-D-muramate + L-alanine + ATP = UDP-N-acetyl-alpha-D-muramoyl-L-alanine + ADP + phosphate + H(+). Its pathway is cell wall biogenesis; peptidoglycan biosynthesis. Its function is as follows. Cell wall formation. This Burkholderia cenocepacia (strain HI2424) protein is UDP-N-acetylmuramate--L-alanine ligase.